Reading from the N-terminus, the 162-residue chain is UPF0262 protein AZC_3148 (162 aa).

The protein belongs to the UPF0262 family.

The polypeptide is UPF0262 protein AZC_3148 (Azorhizobium caulinodans (strain ATCC 43989 / DSM 5975 / JCM 20966 / LMG 6465 / NBRC 14845 / NCIMB 13405 / ORS 571)).